Consider the following 361-residue polypeptide: Gibberellin 20 oxidase 1-D (361 aa).

In terms of domain architecture, Fe2OG dioxygenase spans 199-299 (GNDSIMRLNY…RKSLAFFLCP (101 aa)). Positions 224, 226, and 280 each coordinate Fe cation. Residue R290 is part of the active site.

The protein belongs to the iron/ascorbate-dependent oxidoreductase family. GA20OX subfamily. Fe cation serves as cofactor. It depends on L-ascorbate as a cofactor. Expressed in nodes and the ear of the elongating stem.

The enzyme catalyses gibberellin A12 + 2 2-oxoglutarate + 3 O2 + H(+) = gibberellin A9 + 2 succinate + 3 CO2 + 2 H2O. It catalyses the reaction gibberellin A53 + 2 2-oxoglutarate + 3 O2 + H(+) = gibberellin A20 + 2 succinate + 3 CO2 + 2 H2O. Functionally, key oxidase enzyme in the biosynthesis of gibberellin that catalyzes the conversion of GA12 and GA53 to GA9 and GA20 respectively, via a three-step oxidation at C-20 of the GA skeleton. This chain is Gibberellin 20 oxidase 1-D (GA20ox1D), found in Triticum aestivum (Wheat).